The following is a 74-amino-acid chain: Conotoxin Vi15a (74 aa).

The signal sequence occupies residues 1–19; the sequence is MMPVILLLLLSLAIRCADG. Positions 20–43 are excised as a propeptide; it reads KAVQGDSDPSASLLTGDKNHDLPV. The residue at position 72 (W72) is a Tryptophan amide.

Contains four disulfide bonds. As to expression, expressed by the venom duct.

It is found in the secreted. This chain is Conotoxin Vi15a, found in Conus virgo (Virgin cone).